The chain runs to 200 residues: Rubrerythrin (200 aa).

In terms of domain architecture, Ferritin-like diiron spans 12–155 (SIKGSKTEKH…ALLAHVEDGS (144 aa)). 10 residues coordinate Fe(3+): E29, E62, E103, E106, E137, H140, C167, C170, C183, and C186. A Rubredoxin-like domain is found at 162 to 200 (EIAWQCRNCGYVITSKKAPKLCPACAHPQAYFEPMKTNY).

In terms of assembly, homodimer. Possesses two rubredoxin-like centers and two non-sulfur oxo-bridged di-iron centers per dimer. The cofactor is Fe(3+).

The protein resides in the cytoplasm. May provide oxidative stress protection via catalytic reduction of intracellular hydrogen peroxide. This is Rubrerythrin (rbr) from Porphyromonas gingivalis (strain ATCC BAA-308 / W83).